Consider the following 357-residue polypeptide: MVSSDSVNSRVETLAGSGISTIPKEYIRPKDELVNIGDIFEQEKNNEGPQVPTIDLKEIESDNEKVRAKCREKLKKAAVDWGVMHLVNHGISDELMDKVRKAGKAFFDLPIEQKEKYANDQASGKIQGYGSKLANNASGQLEWEDYFFHCVYPEDKRDLSIWPQTPADYIEATAEYAKQLRELATKVLKVLSLGLGLDEGRLEKEVGGLEELLLQMKINYYPKCPQPELALGVEAHTDVSALTFILHNMVPGLQLFYEGKWVTAKCVPNSIVMHIGDTLEILSNGKYKSILHRGMVNKEKVRISWAVFCEPPKEKIILKPLPETVSEDEPAMFPPRTFAEHIQHKLFRKSQEALLPK.

A Fe2OG dioxygenase domain is found at 212–311 (LLLQMKINYY…RISWAVFCEP (100 aa)). Fe cation contacts are provided by His236, Asp238, and His292.

The protein belongs to the iron/ascorbate-dependent oxidoreductase family. It depends on Fe cation as a cofactor. Requires L-ascorbate as cofactor.

It catalyses the reaction a (2R,3S,4S)-leucoanthocyanidin + 2-oxoglutarate + O2 = a 4-H-anthocyanidin with a 3-hydroxy group + succinate + CO2 + 2 H2O. It participates in pigment biosynthesis; anthocyanin biosynthesis. In terms of biological role, oxidation of leucoanthocyanidins into anthocyanidins. This is Leucoanthocyanidin dioxygenase (ANS) from Malus domestica (Apple).